The following is a 96-amino-acid chain: Large ribosomal subunit protein eL21 (96 aa).

It belongs to the eukaryotic ribosomal protein eL21 family.

The chain is Large ribosomal subunit protein eL21 from Methanoregula boonei (strain DSM 21154 / JCM 14090 / 6A8).